The following is a 126-amino-acid chain: DNA-directed RNA polymerase I subunit RPA12 (126 aa).

6 residues coordinate Zn(2+): C20, C23, C38, C41, C87, and C90. The segment at 20 to 41 (CSDCGSVLPLPGAQDTVTCIRC) adopts a C4-type zinc-finger fold. The segment at 83–123 (VDRRCPRCGHEGMAYHTRQMRSADEGQTVFYTCTNCKFQEK) adopts a TFIIS-type zinc-finger fold. The short motif at 106 to 107 (DE) is the Hairpin element. C115 and C118 together coordinate Zn(2+).

Belongs to the archaeal RpoM/eukaryotic RPA12/RPB9/RPC11 RNA polymerase family. Component of the RNA polymerase I (Pol I) complex consisting of 13 subunits: a ten-subunit catalytic core composed of POLR1A/RPA1, POLR1B/RPA2, POLR1C/RPAC1, POLR1D/RPAC2, POLR1H/RPA12, POLR2E/RPABC1, POLR2F/RPABC2, POLR2H/RPABC3, POLR2K/RPABC4 and POLR2L/RPABC5; a mobile stalk subunit POLR1F/RPA43 protruding from the core and additional subunits homologous to general transcription factors POLR1E/RPA49 and POLR1G/RPA34. Part of Pol I pre-initiation complex (PIC), in which Pol I core assembles with RRN3 and promoter-bound UTBF and SL1/TIF-IB complex.

Its subcellular location is the nucleus. It localises to the nucleolus. In terms of biological role, core component of RNA polymerase I (Pol I), a DNA-dependent RNA polymerase which synthesizes ribosomal RNA precursors using the four ribonucleoside triphosphates as substrates. Can mediate Pol I proofreading of the nascent RNA transcript. Anchors into the Pol I active site to monitor transcription fidelity and cleave mis-incorporated 5'-ribonucleotides. The sequence is that of DNA-directed RNA polymerase I subunit RPA12 from Homo sapiens (Human).